The following is a 185-amino-acid chain: Ribosome-recycling factor (185 aa).

This sequence belongs to the RRF family.

It is found in the cytoplasm. In terms of biological role, responsible for the release of ribosomes from messenger RNA at the termination of protein biosynthesis. May increase the efficiency of translation by recycling ribosomes from one round of translation to another. In Idiomarina loihiensis (strain ATCC BAA-735 / DSM 15497 / L2-TR), this protein is Ribosome-recycling factor.